The following is a 444-amino-acid chain: MSERKYFGTDGIRGKVGESPITPDFVLKLGFAAGKVLARHGSKQIIIGKDTRISGYMLESALEAGLAAAGLSAAFTGPMPTPAVAYLTRTFRAEAGIVISASHNPFDDNGIKFFSTEGTKLPDDVEAAIEAEMEKPITCVESAALGRASRIVDAAGRYIEFCKGTFPSQLSLNGLKIVVDCANGATYHIAPNVLRELGATVISIGVQPDGMNINKECGATDLRLLQERVLAEKADVGLAYDGDGDRIMMVDHLGHKVDGDQILYLIAREGLRQGELRGGVVGTLMSNMGLELALKQLGIPFARAKVGDRYVLEKLKEKGWRLGAENSGHVILLDKTTTGDGIVAGLQVLTAMVRNHMSLHDLCSGMKLLPQILVNVRFSGSSDPLEDARVKAVTAEAEIELKGRGRVLLRKSGTEPLIRVMVEGEDEALVSTLANRIADAVKAV.

Ser-102 serves as the catalytic Phosphoserine intermediate. Residues Ser-102, Asp-241, Asp-243, and Asp-245 each coordinate Mg(2+). Ser-102 is subject to Phosphoserine.

The protein belongs to the phosphohexose mutase family. Mg(2+) serves as cofactor. Post-translationally, activated by phosphorylation.

It catalyses the reaction alpha-D-glucosamine 1-phosphate = D-glucosamine 6-phosphate. Catalyzes the conversion of glucosamine-6-phosphate to glucosamine-1-phosphate. The polypeptide is Phosphoglucosamine mutase (Erwinia tasmaniensis (strain DSM 17950 / CFBP 7177 / CIP 109463 / NCPPB 4357 / Et1/99)).